The primary structure comprises 276 residues: Large ribosomal subunit protein uL2 (276 aa).

The segment at 218-255 (PTVRGSAMNPCDHPHGGGEGRTPIGMSSPVTPWGKPAL) is disordered.

This sequence belongs to the universal ribosomal protein uL2 family. In terms of assembly, part of the 50S ribosomal subunit. Forms a bridge to the 30S subunit in the 70S ribosome.

One of the primary rRNA binding proteins. Required for association of the 30S and 50S subunits to form the 70S ribosome, for tRNA binding and peptide bond formation. It has been suggested to have peptidyltransferase activity; this is somewhat controversial. Makes several contacts with the 16S rRNA in the 70S ribosome. This chain is Large ribosomal subunit protein uL2, found in Clostridium tetani (strain Massachusetts / E88).